A 152-amino-acid polypeptide reads, in one-letter code: Transcriptional repressor NrdR (152 aa).

A zinc finger lies at 3–34 (CCYCGHGESKVLETRSAEEGRVIRRRRECMEC). Positions 49 to 139 (LIVRKKGGSL…VYRQFTDVGR (91 aa)) constitute an ATP-cone domain.

It belongs to the NrdR family. Zn(2+) serves as cofactor.

Negatively regulates transcription of bacterial ribonucleotide reductase nrd genes and operons by binding to NrdR-boxes. The protein is Transcriptional repressor NrdR of Heliobacterium modesticaldum (strain ATCC 51547 / Ice1).